A 254-amino-acid chain; its full sequence is Protein N-terminal and lysine N-methyltransferase EFM7 (254 aa).

Residues Trp57, 84 to 86 (GAA), Asp106, Trp138, and Ser165 contribute to the S-adenosyl-L-methionine site.

The protein belongs to the class I-like SAM-binding methyltransferase superfamily. EFM7 family.

It is found in the cytoplasm. Its function is as follows. S-adenosyl-L-methionine-dependent protein methyltransferase that trimethylates the N-terminal glycine 'Gly-2' of elongation factor 1-alpha, before also catalyzing the mono- and dimethylation of 'Lys-3'. This chain is Protein N-terminal and lysine N-methyltransferase EFM7, found in Debaryomyces hansenii (strain ATCC 36239 / CBS 767 / BCRC 21394 / JCM 1990 / NBRC 0083 / IGC 2968) (Yeast).